The sequence spans 235 residues: Protein GrpE (235 aa).

Residues 1 to 18 show a composition bias toward polar residues; sequence MTDGNQKPDGNSGEQVTV. Disordered stretches follow at residues 1 to 50 and 198 to 235; these read MTDG…DAAH and ESVDDGTAVADTAENDQADQGNSADTSGEQAESEPSGS. Positions 19–35 are enriched in basic and acidic residues; that stretch reads TDKRRIDPETGEVRHVP. Over residues 215–235 the composition is skewed to polar residues; that stretch reads ADQGNSADTSGEQAESEPSGS.

The protein belongs to the GrpE family. In terms of assembly, homodimer.

The protein resides in the cytoplasm. Functionally, participates actively in the response to hyperosmotic and heat shock by preventing the aggregation of stress-denatured proteins, in association with DnaK and GrpE. It is the nucleotide exchange factor for DnaK and may function as a thermosensor. Unfolded proteins bind initially to DnaJ; upon interaction with the DnaJ-bound protein, DnaK hydrolyzes its bound ATP, resulting in the formation of a stable complex. GrpE releases ADP from DnaK; ATP binding to DnaK triggers the release of the substrate protein, thus completing the reaction cycle. Several rounds of ATP-dependent interactions between DnaJ, DnaK and GrpE are required for fully efficient folding. The chain is Protein GrpE from Mycobacterium tuberculosis (strain ATCC 25177 / H37Ra).